Reading from the N-terminus, the 395-residue chain is Protein-arginine rhamnosyltransferase (395 aa).

DTDP-beta-L-rhamnose is bound by residues 19–22, Y205, Q272, and 288–292; these read NYGD and RGEDS. The active-site Proton acceptor is D22. E290 is a catalytic residue.

It belongs to the glycosyltransferase 104 family.

The catalysed reaction is dTDP-beta-L-rhamnose + L-arginyl-[protein] = N(omega)-(alpha-L-rhamnosyl)-L-arginyl-[protein] + dTDP + H(+). Functionally, protein-arginine rhamnosyltransferase that catalyzes the transfer of a single rhamnose to elongation factor P (EF-P) on 'Lys-32', a modification required for EF-P-dependent rescue of polyproline stalled ribosomes. The chain is Protein-arginine rhamnosyltransferase from Shewanella oneidensis (strain ATCC 700550 / JCM 31522 / CIP 106686 / LMG 19005 / NCIMB 14063 / MR-1).